Reading from the N-terminus, the 63-residue chain is Large ribosomal subunit protein uL30 (63 aa).

Belongs to the universal ribosomal protein uL30 family. In terms of assembly, part of the 50S ribosomal subunit.

This is Large ribosomal subunit protein uL30 from Caulobacter sp. (strain K31).